A 379-amino-acid polypeptide reads, in one-letter code: Heme A synthase (379 aa).

The tract at residues 1–28 is disordered; the sequence is MAGSRSIFEEVQDSQKPAAMPGGVSRDR. 8 helical membrane-spanning segments follow: residues 35–55, 124–144, 150–170, 183–203, 227–247, 287–307, 318–338, and 341–361; these read VRVFIMILFVMVVVQIAIGGL, FLGVVWAVGFVGLLATKSVPV, LLLLGVLGGLQGVAGWWMVHS, RLAVHLGLAFLILGLMAWYIL, ATGLLHLTALQILIGALVAGI, FFHRVTGYLLFVIGVAAWIMA, AFDWMAVMLFGQIVLGIMTVM, and SPWYLAIVHQFGAVVLITLIL. Heme is bound at residue H289. H349 is a heme binding site.

Belongs to the COX15/CtaA family. Type 2 subfamily. As to quaternary structure, interacts with CtaB. It depends on heme b as a cofactor.

The protein localises to the cell membrane. It catalyses the reaction Fe(II)-heme o + 2 A + H2O = Fe(II)-heme a + 2 AH2. Its pathway is porphyrin-containing compound metabolism; heme A biosynthesis; heme A from heme O: step 1/1. Its function is as follows. Catalyzes the conversion of heme O to heme A by two successive hydroxylations of the methyl group at C8. The first hydroxylation forms heme I, the second hydroxylation results in an unstable dihydroxymethyl group, which spontaneously dehydrates, resulting in the formyl group of heme A. This chain is Heme A synthase, found in Jannaschia sp. (strain CCS1).